The sequence spans 810 residues: DNA gyrase subunit A (810 aa).

One can recognise a Topo IIA-type catalytic domain in the interval 36–502 (LPDVRDGLKP…EVLKTSMSDL (467 aa)). Tyr-124 acts as the O-(5'-phospho-DNA)-tyrosine intermediate in catalysis. The GyrA-box motif lies at 529–535 (QGIGGKG).

This sequence belongs to the type II topoisomerase GyrA/ParC subunit family. As to quaternary structure, heterotetramer, composed of two GyrA and two GyrB chains. In the heterotetramer, GyrA contains the active site tyrosine that forms a transient covalent intermediate with DNA, while GyrB binds cofactors and catalyzes ATP hydrolysis.

It localises to the cytoplasm. It catalyses the reaction ATP-dependent breakage, passage and rejoining of double-stranded DNA.. In terms of biological role, a type II topoisomerase that negatively supercoils closed circular double-stranded (ds) DNA in an ATP-dependent manner to modulate DNA topology and maintain chromosomes in an underwound state. Negative supercoiling favors strand separation, and DNA replication, transcription, recombination and repair, all of which involve strand separation. Also able to catalyze the interconversion of other topological isomers of dsDNA rings, including catenanes and knotted rings. Type II topoisomerases break and join 2 DNA strands simultaneously in an ATP-dependent manner. This is DNA gyrase subunit A from Borrelia hermsii (strain HS1 / DAH).